A 433-amino-acid chain; its full sequence is Pyrimidine-nucleoside phosphorylase (433 aa).

Position 81–83 (Lys81–Ser83) interacts with phosphate. K(+) contacts are provided by Gly88 and Thr90. Phosphate-binding positions include Thr92, Lys108–Ser110, and Thr120. The substrate site is built by Arg168 and Lys187. Leu243, Ala246, and Glu255 together coordinate K(+).

This sequence belongs to the thymidine/pyrimidine-nucleoside phosphorylase family. As to quaternary structure, homodimer. The cofactor is K(+).

It catalyses the reaction uridine + phosphate = alpha-D-ribose 1-phosphate + uracil. The enzyme catalyses thymidine + phosphate = 2-deoxy-alpha-D-ribose 1-phosphate + thymine. It carries out the reaction 2'-deoxyuridine + phosphate = 2-deoxy-alpha-D-ribose 1-phosphate + uracil. Catalyzes phosphorolysis of the pyrimidine nucleosides uridine, thymidine and 2'-deoxyuridine with the formation of the corresponding pyrimidine base and ribose-1-phosphate. The chain is Pyrimidine-nucleoside phosphorylase (pdp) from Staphylococcus epidermidis (strain ATCC 35984 / DSM 28319 / BCRC 17069 / CCUG 31568 / BM 3577 / RP62A).